Reading from the N-terminus, the 330-residue chain is GTPase Obg (330 aa).

The Obg domain maps to 1–159; that stretch reads MHFIDEVKIY…MWIHLRLKLL (159 aa). Positions 160–327 constitute an OBG-type G domain; it reads SDVGLVGLPN…IVKLALEIIK (168 aa). GTP is bound by residues 166–173, 191–195, 212–215, 279–282, and 308–310; these read GLPNAGKS, FTTLV, DIPG, NKCD, and STY. Residues serine 173 and threonine 193 each contribute to the Mg(2+) site.

The protein belongs to the TRAFAC class OBG-HflX-like GTPase superfamily. OBG GTPase family. Monomer. It depends on Mg(2+) as a cofactor.

The protein resides in the cytoplasm. Its function is as follows. An essential GTPase which binds GTP, GDP and possibly (p)ppGpp with moderate affinity, with high nucleotide exchange rates and a fairly low GTP hydrolysis rate. Plays a role in control of the cell cycle, stress response, ribosome biogenesis and in those bacteria that undergo differentiation, in morphogenesis control. This chain is GTPase Obg, found in Rickettsia typhi (strain ATCC VR-144 / Wilmington).